Consider the following 570-residue polypeptide: Phosphoribosylaminoimidazole carboxylase (570 aa).

One can recognise an ATP-grasp domain in the interval 110–297; it reads KQHLVKNRIP…QFEAHLRAIL (188 aa). ATP is bound at residue 137–192; sequence GSSLGYPFVLKSRTLAYDGRGNFVVKSEEDIEKGLEFLANRPLYAEKWASFKKELS.

In the C-terminal section; belongs to the AIR carboxylase family. Class I subfamily.

The enzyme catalyses 5-amino-1-(5-phospho-D-ribosyl)imidazole-4-carboxylate + H(+) = 5-amino-1-(5-phospho-beta-D-ribosyl)imidazole + CO2. It functions in the pathway purine metabolism; IMP biosynthesis via de novo pathway; 5-amino-1-(5-phospho-D-ribosyl)imidazole-4-carboxylate from 5-amino-1-(5-phospho-D-ribosyl)imidazole (carboxylase route): step 1/1. The polypeptide is Phosphoribosylaminoimidazole carboxylase (ADE2) (Candida glabrata (strain ATCC 2001 / BCRC 20586 / JCM 3761 / NBRC 0622 / NRRL Y-65 / CBS 138) (Yeast)).